The chain runs to 560 residues: Membrane protein insertase YidC (560 aa).

The next 6 helical transmembrane spans lie at 5–25, 334–354, 357–377, 431–451, 476–496, and 522–542; these read IINLIAAIILSLSIIFGWQYF, AIDFGWFYIITKPVFYAMNFF, YVGNFGVSILIVTVIIKLLMF, LPILVQIPVFFSIYKVLYVTI, LFGLLPFAPPSFLMIGAWPIL, and FMPLIFLFMFSSFPVGLLIYW.

It belongs to the OXA1/ALB3/YidC family. Type 1 subfamily. In terms of assembly, interacts with the Sec translocase complex via SecD. Specifically interacts with transmembrane segments of nascent integral membrane proteins during membrane integration.

It localises to the cell inner membrane. In terms of biological role, required for the insertion and/or proper folding and/or complex formation of integral membrane proteins into the membrane. Involved in integration of membrane proteins that insert both dependently and independently of the Sec translocase complex, as well as at least some lipoproteins. Aids folding of multispanning membrane proteins. This chain is Membrane protein insertase YidC, found in Rickettsia rickettsii (strain Iowa).